Consider the following 475-residue polypeptide: Glutamate--tRNA ligase (475 aa).

The 'HIGH' region signature appears at 11–21; that stretch reads PSPTGFLHIGG. The 'KMSKS' region motif lies at 240 to 244; the sequence is KLSKR. ATP is bound at residue K243.

Belongs to the class-I aminoacyl-tRNA synthetase family. Glutamate--tRNA ligase type 1 subfamily. Monomer.

It is found in the cytoplasm. The enzyme catalyses tRNA(Glu) + L-glutamate + ATP = L-glutamyl-tRNA(Glu) + AMP + diphosphate. Functionally, catalyzes the attachment of glutamate to tRNA(Glu) in a two-step reaction: glutamate is first activated by ATP to form Glu-AMP and then transferred to the acceptor end of tRNA(Glu). The polypeptide is Glutamate--tRNA ligase (Bradyrhizobium diazoefficiens (strain JCM 10833 / BCRC 13528 / IAM 13628 / NBRC 14792 / USDA 110)).